A 404-amino-acid chain; its full sequence is S-adenosylmethionine synthase (404 aa).

141–146 is an ATP binding site; sequence GQGSVD.

Belongs to the AdoMet synthase 2 family. The cofactor is Mg(2+).

It carries out the reaction L-methionine + ATP + H2O = S-adenosyl-L-methionine + phosphate + diphosphate. It participates in amino-acid biosynthesis; S-adenosyl-L-methionine biosynthesis; S-adenosyl-L-methionine from L-methionine: step 1/1. Catalyzes the formation of S-adenosylmethionine from methionine and ATP. The sequence is that of S-adenosylmethionine synthase from Methanococcus vannielii (strain ATCC 35089 / DSM 1224 / JCM 13029 / OCM 148 / SB).